The primary structure comprises 899 residues: Protein argonaute (899 aa).

The segment at 107–129 (TQKPKRRGGRAGGMRGNRGGPST) is disordered. A compositionally biased stretch (gly residues) spans 116-125 (RAGGMRGNRG). Residues 229-313 (SMCELLNENR…KQDDYCNSVL (85 aa)) form the PAZ domain. The Piwi domain maps to 555–878 (LVVVVIPGPK…LSKFCGEILG (324 aa)).

Belongs to the argonaute family. Ago subfamily. As to quaternary structure, interacts with miR2. Highly specific binding to the mRNA m7G-cap. May be a component of the RNA-induced silencing complex (RISC), a sequence-specific, multicomponent nuclease that destroys or silences messenger RNAs homologous to the silencing trigger.

It is found in the cytoplasm. In terms of biological role, plays an essential role in growth and, with Dicer, also involved in microRNA (miRNA)-mediated translational repression. The RNA interference pathway is implicated in antigenic variation having a role in regulation of variant-specific surface protein (VSP)-coding gene expression. Several VSP genes are transcribed but only transcripts encoding the VSP to be expressed accumulate. Antisense RNAs corresponding to the silenced VSP genes are detected. The sequence is that of Protein argonaute from Giardia intestinalis (strain ATCC 50581 / GS clone H7) (Giardia lamblia).